Here is a 315-residue protein sequence, read N- to C-terminus: Neuroguidin (315 aa).

The residue at position 2 (Ala2) is an N-acetylalanine. A coiled-coil region spans residues 13–41 (SAVTLLKNLQEQVMAVTAQVKSLTQKVQA). The tract at residues 41–174 (AGAYPTEKGL…KGVSKKYVPP (134 aa)) is necessary for interaction with EIF4E. Ser121, Ser142, and Ser143 each carry phosphoserine. Positions 124-169 (ENDPLRFKPHPSNMMSKLSSEDEEEDEAEDDQSEASGKKSVKGVSK) are disordered. The segment covering 144–156 (EDEEEDEAEDDQS) has biased composition (acidic residues). Positions 181–205 (YDETEAEREKKRLERAKRRALSSSV) form a coiled coil. 2 positions are modified to phosphoserine: Ser204 and Ser214. The tract at residues 277–315 (DISALTGGTVHLDEDQNPIKKRKKIPQKGRKKKGFRRRR) is disordered. Over residues 295–315 (IKKRKKIPQKGRKKKGFRRRR) the composition is skewed to basic residues.

It belongs to the SAS10 family. As to quaternary structure, part of the small subunit (SSU) processome, composed of more than 70 proteins and the RNA chaperone small nucleolar RNA (snoRNA) U3. Interacts with CPEB1 and EIF4E.

Its subcellular location is the nucleus. It localises to the nucleolus. The protein localises to the chromosome. It is found in the centromere. The protein resides in the cytoplasm. Its subcellular location is the cell projection. It localises to the axon. The protein localises to the dendrite. It is found in the filopodium. Functionally, part of the small subunit (SSU) processome, first precursor of the small eukaryotic ribosomal subunit. During the assembly of the SSU processome in the nucleolus, many ribosome biogenesis factors, an RNA chaperone and ribosomal proteins associate with the nascent pre-rRNA and work in concert to generate RNA folding, modifications, rearrangements and cleavage as well as targeted degradation of pre-ribosomal RNA by the RNA exosome. Its dissociation from the complex determines the transition from state pre-A1 to state pre-A1*. Inhibits mRNA translation in a cytoplasmic polyadenylation element (CPE)-dependent manner. This chain is Neuroguidin, found in Homo sapiens (Human).